The following is a 485-amino-acid chain: Aspartyl/glutamyl-tRNA(Asn/Gln) amidotransferase subunit B (485 aa).

The protein belongs to the GatB/GatE family. GatB subfamily. As to quaternary structure, heterotrimer of A, B and C subunits.

The enzyme catalyses L-glutamyl-tRNA(Gln) + L-glutamine + ATP + H2O = L-glutaminyl-tRNA(Gln) + L-glutamate + ADP + phosphate + H(+). It carries out the reaction L-aspartyl-tRNA(Asn) + L-glutamine + ATP + H2O = L-asparaginyl-tRNA(Asn) + L-glutamate + ADP + phosphate + 2 H(+). Functionally, allows the formation of correctly charged Asn-tRNA(Asn) or Gln-tRNA(Gln) through the transamidation of misacylated Asp-tRNA(Asn) or Glu-tRNA(Gln) in organisms which lack either or both of asparaginyl-tRNA or glutaminyl-tRNA synthetases. The reaction takes place in the presence of glutamine and ATP through an activated phospho-Asp-tRNA(Asn) or phospho-Glu-tRNA(Gln). This chain is Aspartyl/glutamyl-tRNA(Asn/Gln) amidotransferase subunit B, found in Ruminiclostridium cellulolyticum (strain ATCC 35319 / DSM 5812 / JCM 6584 / H10) (Clostridium cellulolyticum).